Consider the following 414-residue polypeptide: Glucose-1-phosphate adenylyltransferase (414 aa).

Residues G164, 184 to 185, and S204 contribute to the alpha-D-glucose 1-phosphate site; that span reads EK.

It belongs to the bacterial/plant glucose-1-phosphate adenylyltransferase family. In terms of assembly, homotetramer.

The enzyme catalyses alpha-D-glucose 1-phosphate + ATP + H(+) = ADP-alpha-D-glucose + diphosphate. It participates in glycan biosynthesis; glycogen biosynthesis. Its function is as follows. Involved in the biosynthesis of ADP-glucose, a building block required for the elongation reactions to produce glycogen. Catalyzes the reaction between ATP and alpha-D-glucose 1-phosphate (G1P) to produce pyrophosphate and ADP-Glc. The sequence is that of Glucose-1-phosphate adenylyltransferase from Acidothermus cellulolyticus (strain ATCC 43068 / DSM 8971 / 11B).